The primary structure comprises 188 residues: Ion-translocating oxidoreductase complex subunit B (188 aa).

The interval 1–26 (MNGVLLAIGVLLPICLASGALLGYAA) is hydrophobic. One can recognise a 4Fe-4S domain in the interval 32–90 (QGDPVAERVNALLPQTQCGQCGYPGCKPYAEAIAAGDRINKCPPGGEATIQALADLLDL). [4Fe-4S] cluster contacts are provided by Cys49, Cys52, Cys57, Cys73, Cys113, Cys116, Cys119, Cys123, Cys143, Cys146, Cys149, and Cys153. 4Fe-4S ferredoxin-type domains are found at residues 104 to 133 (RVAYIREAECIGCTKCIQACPVDAIVGAAR) and 134 to 163 (LMHTVIADECTGCDLCLEPCPVDCIEMREI).

The protein belongs to the 4Fe4S bacterial-type ferredoxin family. RnfB subfamily. As to quaternary structure, the complex is composed of six subunits: RnfA, RnfB, RnfC, RnfD, RnfE and RnfG. It depends on [4Fe-4S] cluster as a cofactor.

Its subcellular location is the cell inner membrane. Part of a membrane-bound complex that couples electron transfer with translocation of ions across the membrane. This is Ion-translocating oxidoreductase complex subunit B from Pseudomonas paraeruginosa (strain DSM 24068 / PA7) (Pseudomonas aeruginosa (strain PA7)).